A 24-amino-acid chain; its full sequence is Neurotoxin-2 (24 aa).

An LCN-type CS-alpha/beta domain is found at 1–24 (EDGYLLNRDTGCKVSCGTCRYCND).

Belongs to the long (4 C-C) scorpion toxin superfamily. Sodium channel inhibitor family. Alpha subfamily. As to expression, expressed by the venom gland.

It is found in the secreted. Binds to sodium channels (Nav) and inhibits the inactivation of the activated channels, thereby blocking neuronal transmission. This toxin is active against mammals. This is Neurotoxin-2 from Hottentotta tamulus (Eastern Indian scorpion).